Consider the following 232-residue polypeptide: Large ribosomal subunit protein uL10c (232 aa).

A chloroplast-targeting transit peptide spans 1-52 (MESTLFLSKPLPTTIKTTTHSLSSVYPNPFKPNNLTFPRTTHKHPTTTTITA).

Belongs to the universal ribosomal protein uL10 family. Component of the chloroplast large ribosomal subunit (LSU). Mature 70S chloroplast ribosomes of higher plants consist of a small (30S) and a large (50S) subunit. The 30S small subunit contains 1 molecule of ribosomal RNA (16S rRNA) and 24 different proteins. The 50S large subunit contains 3 rRNA molecules (23S, 5S and 4.5S rRNA) and 33 different proteins.

Its subcellular location is the plastid. The protein localises to the chloroplast. Its function is as follows. Component of the chloroplast ribosome (chloro-ribosome), a dedicated translation machinery responsible for the synthesis of chloroplast genome-encoded proteins, including proteins of the transcription and translation machinery and components of the photosynthetic apparatus. The protein is Large ribosomal subunit protein uL10c (RPL10) of Spinacia oleracea (Spinach).